The sequence spans 242 residues: Lysosomal membrane ascorbate-dependent ferrireductase CYB561A3 (242 aa).

The Cytoplasmic portion of the chain corresponds to 1 to 4 (MASG). A helical membrane pass occupies residues 5 to 25 (WFYLSCMVLGSLGSMCILFTA). Positions 12–219 (VLGSLGSMCI…FGLLVLYVLL (208 aa)) constitute a Cytochrome b561 domain. Residues 26-40 (YWMQYWRGGFAWDGT) lie on the Lumenal side of the membrane. Residues 41-61 (VLMFNWHPVLMVAGMVVLYGA) form a helical membrane-spanning segment. Residues histidine 47 and arginine 67 each contribute to the heme b site. Residues 62-81 (ASLVYRLPSSWVGPRLPWKV) lie on the Cytoplasmic side of the membrane. Arginine 76 and lysine 80 together coordinate L-ascorbate. The helical transmembrane segment at 82–102 (LHAALHLLAFTCTVVGLIAVF) threads the bilayer. Heme b is bound by residues histidine 83, 112–115 (HLYS), and histidine 117. The Lumenal segment spans residues 103–119 (RFHNHSRIAHLYSLHSW). The helical transmembrane segment at 120 to 140 (LGITTVVLFACQWFLGFAVFL) threads the bilayer. The Cytoplasmic segment spans residues 141–154 (LPWASQWLRSLLKP). Arginine 149 lines the L-ascorbate pocket. A helical membrane pass occupies residues 155–175 (LHVFFGACILSLSITSVISGI). Heme b contacts are provided by histidine 156 and glutamate 177. The Lumenal portion of the chain corresponds to 176–202 (NEKLFFVLKNATKPYSSLPGEAVFANS). The helical transmembrane segment at 203-223 (TGLLVVAFGLLVLYVLLASSW) threads the bilayer. Lysine 224 lines the heme b pocket. Topologically, residues 224–242 (KRPDPGALTDRQPLLHDRE) are cytoplasmic.

In terms of assembly, homodimer. Requires heme b as cofactor. In terms of processing, N-glycosylated. As to expression, present in lung, spleen, thymus and testis. Present at low level in brain, heart, liver and kidney. Expressed in the alveolar macrophages of the lung, in the white pulp of the spleen, widespread in the thymus, and in the Sertoli cells of the testis (at protein level).

It is found in the late endosome membrane. The protein resides in the lysosome membrane. The enzyme catalyses Fe(3+)(out) + L-ascorbate(in) = monodehydro-L-ascorbate radical(in) + Fe(2+)(out) + H(+). In terms of biological role, transmembrane reductase that uses ascorbate as an electron donor in the cytoplasm and transfers electrons across membranes to reduce iron cations Fe(3+) into Fe(2+) in the lumen of the late endosome and lysosome. Reduced iron can then be extruded from the late endosome and lysosome to the cytoplasm by divalent metal-specific transporters. It is therefore most probably involved in endosomal and lysosomal cellular iron homeostasis. This chain is Lysosomal membrane ascorbate-dependent ferrireductase CYB561A3, found in Mus musculus (Mouse).